A 1261-amino-acid chain; its full sequence is AT-rich interactive domain-containing protein 4A (1261 aa).

The tract at residues 4-121 (ADEPAYLTVG…RHFAESETLD (118 aa)) is DNA-binding. 3 disordered regions span residues 142 to 169 (RGRRSSLPITEDEKEEESSEEEDEDKRR), 273 to 310 (ESSSSDDEECPAEEHEEEKEKEAKKEEEELPEEELDPE), and 435 to 470 (APEMPLLDVKSEPEENTDSNSESDREDTELKSPRGR). Acidic residues-rich tracts occupy residues 151–165 (TEDEKEEESSEEEDE) and 276–289 (SSDDEECPAEEHEE). Residues 290–299 (EKEKEAKKEE) are compositionally biased toward basic and acidic residues. The span at 300–310 (EELPEEELDPE) shows a compositional bias: acidic residues. Residues 309 to 401 (PEERDNFLQQ…YLYGFEEYCR (93 aa)) form the ARID domain. Residue K481 forms a Glycyl lysine isopeptide (Lys-Gly) (interchain with G-Cter in SUMO2) linkage. 3 disordered regions span residues 498 to 582 (LENK…GTKV), 633 to 768 (WPLD…EAGD), and 842 to 953 (FSST…EDAM). The span at 512 to 522 (PAAKREHELLF) shows a compositional bias: basic and acidic residues. Over residues 526-536 (STPKNKEKKIK) the composition is skewed to basic residues. The segment covering 541-551 (SERDSDEEEEK) has biased composition (acidic residues). Over residues 552–564 (SQEREETESRCDS) the composition is skewed to basic and acidic residues. Positions 565-574 (EGEDEEDDTE) are enriched in acidic residues. The Tudor-knot domain maps to 579–631 (GTKVKVKYGRGKTQKIYEASIKSTEMDDGEILYLVHYYGWNVRYDEWVKADRI). Residues 640–649 (PKKKQKKKVK) show a composition bias toward basic residues. Basic and acidic residues predominate over residues 650–665 (NKEDSEKDEKRDEERQ). Over residues 676–689 (STFSPNMPYSLSKT) the composition is skewed to polar residues. S679 is subject to Phosphoserine. Low complexity predominate over residues 690-702 (SNSEGKSDSCSSD). Residues 708 to 753 (QLEKSSGGEDLSPDVKEELEKNENAHDDKLDEENPKIVHISKENDR) show a composition bias toward basic and acidic residues. The residue at position 719 (S719) is a Phosphoserine. Glycyl lysine isopeptide (Lys-Gly) (interchain with G-Cter in SUMO2) cross-links involve residues K723 and K743. S867 carries the phosphoserine modification. Basic and acidic residues-rich tracts occupy residues 899-909 (KGAHVEQHFET) and 929-947 (TSEKSDSPAEEEPVHTPLK). Positions 955 to 968 (LIGPETLVCHEVDL) are retinoblastoma protein binding. The span at 1067–1080 (HERESREKGQKRPS) shows a compositional bias: basic and acidic residues. 2 disordered regions span residues 1067–1173 (HERE…RTYK) and 1216–1261 (RRRK…VECR). Residues S1113 and S1149 each carry the phosphoserine modification. The segment covering 1230-1252 (HAGASMSSASSDTGMSPSSSSPP) has biased composition (low complexity).

As to quaternary structure, identified in mSin3A corepressor complexes together with SIN3A, SIN3B, RBBP4, RBBP7, SAP30, BRMS1, HDAC1 and HDAC2. Interacts with BRMS1. Interacts with RB1. Interacts with ARID4B. Interacts with AR. As to expression, expressed in Sertoli cells of the testis.

The protein localises to the nucleus. Functionally, DNA-binding protein which modulates activity of several transcription factors including RB1 (retinoblastoma-associated protein) and AR (androgen receptor). May function as part of an mSin3A repressor complex. Has no intrinsic transcriptional activity. Plays a role in the regulation of epigenetic modifications at the PWS/AS imprinting center near the SNRPN promoter, where it might function as part of a complex with RB1 and ARID4B. Involved in spermatogenesis, together with ARID4B, where it acts as a transcriptional coactivator for AR and enhances expression of genes required for sperm maturation. Regulates expression of the tight junction protein CLDN3 in the testis, which is important for integrity of the blood-testis barrier. Plays a role in myeloid homeostasis where it regulates the histone methylation state of bone marrow cells and expression of various genes involved in hematopoiesis. May function as a leukemia suppressor. This is AT-rich interactive domain-containing protein 4A from Mus musculus (Mouse).